A 360-amino-acid polypeptide reads, in one-letter code: Photosystem II protein D1 2 (360 aa).

3 consecutive transmembrane segments (helical) span residues Tyr29–Ile46, His118–Leu133, and Trp142–Ala156. His118 contributes to the chlorophyll a binding site. A pheophytin a-binding site is contributed by Tyr126. Positions 170 and 189 each coordinate [CaMn4O5] cluster. Residues Phe197–Leu218 form a helical membrane-spanning segment. His198 provides a ligand contact to chlorophyll a. A quinone-binding positions include His215 and Ser264–Phe265. His215 contacts Fe cation. A Fe cation-binding site is contributed by His272. A helical membrane pass occupies residues Phe274 to Leu288. The [CaMn4O5] cluster site is built by His332, Glu333, Asp342, and Ala344. Positions Ala345–Gly360 are excised as a propeptide.

Belongs to the reaction center PufL/M/PsbA/D family. In terms of assembly, PSII is composed of 1 copy each of membrane proteins PsbA, PsbB, PsbC, PsbD, PsbE, PsbF, PsbH, PsbI, PsbJ, PsbK, PsbL, PsbM, PsbT, PsbX, PsbY, PsbZ, Psb30/Ycf12, peripheral proteins PsbO, CyanoQ (PsbQ), PsbU, PsbV and a large number of cofactors. It forms dimeric complexes. It depends on The D1/D2 heterodimer binds P680, chlorophylls that are the primary electron donor of PSII, and subsequent electron acceptors. It shares a non-heme iron and each subunit binds pheophytin, quinone, additional chlorophylls, carotenoids and lipids. D1 provides most of the ligands for the Mn4-Ca-O5 cluster of the oxygen-evolving complex (OEC). There is also a Cl(-1) ion associated with D1 and D2, which is required for oxygen evolution. The PSII complex binds additional chlorophylls, carotenoids and specific lipids. as a cofactor. Post-translationally, tyr-161 forms a radical intermediate that is referred to as redox-active TyrZ, YZ or Y-Z. C-terminally processed by CtpA; processing is essential to allow assembly of the oxygen-evolving complex and thus photosynthetic growth.

It localises to the cellular thylakoid membrane. It catalyses the reaction 2 a plastoquinone + 4 hnu + 2 H2O = 2 a plastoquinol + O2. Photosystem II (PSII) is a light-driven water:plastoquinone oxidoreductase that uses light energy to abstract electrons from H(2)O, generating O(2) and a proton gradient subsequently used for ATP formation. It consists of a core antenna complex that captures photons, and an electron transfer chain that converts photonic excitation into a charge separation. The D1/D2 (PsbA/PsbD) reaction center heterodimer binds P680, the primary electron donor of PSII as well as several subsequent electron acceptors. The polypeptide is Photosystem II protein D1 2 (Synechococcus elongatus (strain ATCC 33912 / PCC 7942 / FACHB-805) (Anacystis nidulans R2)).